Consider the following 698-residue polypeptide: Polyribonucleotide nucleotidyltransferase (698 aa).

Positions 490 and 496 each coordinate Mg(2+). A KH domain is found at 557–616; sequence PKVVTMTIKPDKIRDVIGPGGKKINEIIDETGVKLDIEQDGTIFIGAVDQAMINRAREII. The S1 motif domain occupies 626–694; that stretch reads GQTYQATVKR…KQGRVNASHR (69 aa).

It belongs to the polyribonucleotide nucleotidyltransferase family. Mg(2+) serves as cofactor.

It is found in the cytoplasm. It catalyses the reaction RNA(n+1) + phosphate = RNA(n) + a ribonucleoside 5'-diphosphate. Involved in mRNA degradation. Catalyzes the phosphorolysis of single-stranded polyribonucleotides processively in the 3'- to 5'-direction. The polypeptide is Polyribonucleotide nucleotidyltransferase (Staphylococcus aureus (strain bovine RF122 / ET3-1)).